Reading from the N-terminus, the 162-residue chain is uncharacterized protein (162 aa).

A disordered region spans residues 1–23 (MAQLPLSPAPQRPETKTPGKPEA). Over residues 13 to 23 (PETKTPGKPEA) the composition is skewed to basic and acidic residues.

This is an uncharacterized protein from Rhodobacter capsulatus (Rhodopseudomonas capsulata).